The sequence spans 1780 residues: Protein TIC 214 (1780 aa).

The next 6 membrane-spanning stretches (helical) occupy residues 19-39 (IINS…FSIG), 68-88 (FIAG…HLAL), 91-111 (PHTI…WNNN), 133-153 (VFLN…SSML), 176-196 (VGWL…LVWI), and 227-247 (IFSI…PSPI). The segment at 251 to 275 (KLKGTSETEERGGTKQDQEVSTEEA) is disordered. The span at 254–268 (GTSETEERGGTKQDQ) shows a compositional bias: basic and acidic residues.

Belongs to the TIC214 family. In terms of assembly, part of the Tic complex.

It localises to the plastid. The protein localises to the chloroplast inner membrane. Functionally, involved in protein precursor import into chloroplasts. May be part of an intermediate translocation complex acting as a protein-conducting channel at the inner envelope. The chain is Protein TIC 214 from Draba nemorosa (Woodland whitlowgrass).